The chain runs to 336 residues: IgLON family member 5 (336 aa).

The N-terminal stretch at 1–30 (MPPPAPGARLRLLAAAALAGLAVISRGLLS) is a signal peptide. Ig-like C2-type domains follow at residues 33–122 (LEFN…QPYT), 132–217 (PARI…VNYP), and 218–307 (PTIT…MRLL). N-linked (GlcNAc...) asparagine glycans are attached at residues N41, N49, N67, and N137. A disulfide bond links C54 and C112. Intrachain disulfides connect C154-C195 and C238-C291. N288 is a glycosylation site (N-linked (GlcNAc...) asparagine).

The protein belongs to the immunoglobulin superfamily. IgLON family.

The protein localises to the secreted. This chain is IgLON family member 5 (IGLON5), found in Homo sapiens (Human).